An 831-amino-acid chain; its full sequence is Leucine--tRNA ligase (831 aa).

A 'HIGH' region motif is present at residues 35–45 (PYPSGKIHVGH). A 'KMSKS' region motif is present at residues 600-604 (KMSKS). Position 603 (lysine 603) interacts with ATP.

This sequence belongs to the class-I aminoacyl-tRNA synthetase family.

The protein localises to the cytoplasm. It catalyses the reaction tRNA(Leu) + L-leucine + ATP = L-leucyl-tRNA(Leu) + AMP + diphosphate. This chain is Leucine--tRNA ligase, found in Rickettsia bellii (strain RML369-C).